A 134-amino-acid chain; its full sequence is MKPSERRKARRLAVQAIYSWQLSGNNIADVEHEFLTEQSLDGVDVAYFRELFAGVATKKTQLDELFIPHLDRPIDEVSPVEKAIVRLAAYELTFRKDVPFKVAINEAIELAKAFGADESHKFVNGLLDKLVARK.

This sequence belongs to the NusB family.

Its function is as follows. Involved in transcription antitermination. Required for transcription of ribosomal RNA (rRNA) genes. Binds specifically to the boxA antiterminator sequence of the ribosomal RNA (rrn) operons. The polypeptide is Transcription antitermination protein NusB (Shewanella sp. (strain MR-4)).